Reading from the N-terminus, the 303-residue chain is Geranylgeranyl pyrophosphate synthase (303 aa).

Lys30, Arg33, and His62 together coordinate isopentenyl diphosphate. Mg(2+) is bound by residues Asp69 and Asp73. A dimethylallyl diphosphate-binding site is contributed by Arg78. Arg79 serves as a coordination point for isopentenyl diphosphate. The dimethylallyl diphosphate site is built by Lys156, Thr157, Gln190, Lys207, and Lys217.

It belongs to the FPP/GGPP synthase family. The cofactor is Mg(2+).

It is found in the cytoplasm. The catalysed reaction is isopentenyl diphosphate + dimethylallyl diphosphate = (2E)-geranyl diphosphate + diphosphate. It carries out the reaction isopentenyl diphosphate + (2E)-geranyl diphosphate = (2E,6E)-farnesyl diphosphate + diphosphate. It catalyses the reaction isopentenyl diphosphate + (2E,6E)-farnesyl diphosphate = (2E,6E,10E)-geranylgeranyl diphosphate + diphosphate. The protein operates within isoprenoid biosynthesis; farnesyl diphosphate biosynthesis; farnesyl diphosphate from geranyl diphosphate and isopentenyl diphosphate: step 1/1. Its pathway is isoprenoid biosynthesis; geranyl diphosphate biosynthesis; geranyl diphosphate from dimethylallyl diphosphate and isopentenyl diphosphate: step 1/1. It functions in the pathway isoprenoid biosynthesis; geranylgeranyl diphosphate biosynthesis; geranylgeranyl diphosphate from farnesyl diphosphate and isopentenyl diphosphate: step 1/1. Its function is as follows. Catalyzes the trans-addition of the three molecules of IPP onto DMAPP to form geranylgeranyl pyrophosphate. This Mucor circinelloides f. lusitanicus (Mucor racemosus var. lusitanicus) protein is Geranylgeranyl pyrophosphate synthase.